The primary structure comprises 410 residues: MALINDNYLKLKAGYLFPEIGRRVRAFAEANPSAKVIRLGIGDVTRPLAPAVLKAFHAAVDDLGTTDNFAGYGPEQGYDWLINAIIEKSYKPLGVSLKTDEMFISDGSKCDCANILDIFALDNVVAIGDPVYPVYNDTNVMIGRTGEADDKGYYKGIVYMPCNEENHFIPSLPTEKVDIIYLCFPNNPTGTVASRAELKKWVDYANANDAVIFFDAAYEAFITDPEIPHSIYEIEGAKKCAIEFRSFSKTAGFTGVRCGLVVVPEEVMGTTSTGERYSFNKLWLRRTTTKFNGASYPVQRAAEAVYSDEGWKQTKEIIDYYMENARIIREGMKEAGLTVYGGVNAPYIWLKTPAGMTSWDFFDKLLTECNVVGTPGSGFGPSGEGYFRLSAFGHRENVIEAVERIKKNLK.

Substrate-binding residues include Tyr-15 and Gly-42. Pyridoxal 5'-phosphate is bound by residues Tyr-72, 108-109 (SK), Tyr-132, Asn-187, Tyr-218, and 246-248 (SFS). Substrate is bound by residues Lys-109, Tyr-132, and Asn-187. The residue at position 249 (Lys-249) is an N6-(pyridoxal phosphate)lysine. Pyridoxal 5'-phosphate is bound by residues Arg-257 and Asn-292. The substrate site is built by Asn-292 and Arg-388.

It belongs to the class-I pyridoxal-phosphate-dependent aminotransferase family. LL-diaminopimelate aminotransferase subfamily. In terms of assembly, homodimer. The cofactor is pyridoxal 5'-phosphate.

It carries out the reaction (2S,6S)-2,6-diaminopimelate + 2-oxoglutarate = (S)-2,3,4,5-tetrahydrodipicolinate + L-glutamate + H2O + H(+). The protein operates within amino-acid biosynthesis; L-lysine biosynthesis via DAP pathway; LL-2,6-diaminopimelate from (S)-tetrahydrodipicolinate (aminotransferase route): step 1/1. Involved in the synthesis of meso-diaminopimelate (m-DAP or DL-DAP), required for both lysine and peptidoglycan biosynthesis. Catalyzes the direct conversion of tetrahydrodipicolinate to LL-diaminopimelate. This is LL-diaminopimelate aminotransferase from Geotalea uraniireducens (strain Rf4) (Geobacter uraniireducens).